The chain runs to 533 residues: Protein translocase subunit SecD (533 aa).

The next 6 membrane-spanning stretches (helical) occupy residues 8-28 (ALLV…TFVS), 377-397 (IVGG…GGVV), 400-420 (LALA…GFTL), 422-442 (LPGI…NVLI), 469-489 (LTIL…LQFG), and 495-515 (GFAV…IFVT).

The protein belongs to the SecD/SecF family. SecD subfamily. Forms a complex with SecF. Part of the essential Sec protein translocation apparatus which comprises SecA, SecYEG and auxiliary proteins SecDF-YajC and YidC.

The protein resides in the cell inner membrane. Part of the Sec protein translocase complex. Interacts with the SecYEG preprotein conducting channel. SecDF uses the proton motive force (PMF) to complete protein translocation after the ATP-dependent function of SecA. This is Protein translocase subunit SecD from Syntrophobacter fumaroxidans (strain DSM 10017 / MPOB).